A 670-amino-acid chain; its full sequence is uncharacterized protein (670 aa).

The interval 53–83 (PTAKPSDFPGDAVTGTQPVPREPSSLPRTTP) is disordered. Tandem repeats lie at residues 143 to 158 (ATPA…TTAT), 171 to 186 (ATPA…TTAT), 200 to 214 (ATPA…TTTP), 215 to 233 (ATPA…TTTP), 234 to 252 (AMPA…TTTP), 253 to 268 (AMPA…TTAT), 279 to 293 (TMPA…TTTP), 294 to 309 (AMPT…TTAT), 320 to 334 (TMPA…TTTP), 335 to 349 (AMPA…VTKP), 362 to 376 (AMPT…TTTP), 377 to 391 (AMPT…TTTP), 392 to 406 (AMPT…TTTP), 407 to 421 (AKPA…TTTP), 422 to 436 (AMPA…TTAP), 437 to 452 (ATPA…TKPT), 464 to 477 (VKPT…TTTT), 478 to 493 (AKPT…TKPT), 504 to 517 (AKPT…TVAT), 518 to 531 (AKPT…TTTT), 532 to 545 (AKPT…TTTT), 546 to 559 (AKPT…TTTT), 560 to 573 (AKPT…TTTT), 574 to 587 (AKPA…TTTT), 588 to 601 (AKPA…TTTT), 602 to 615 (AKPA…TTTT), and 616 to 629 (AKPA…TTTT). A disordered region spans residues 187-225 (PAGANDTAVTTTSATPAGANDTAVTTTPATPAGANDTAN). Residues 205-225 (ANDTAVTTTPATPAGANDTAN) show a composition bias toward low complexity. The segment at 339 to 395 (GANDTANVTKPAGSTDTVVTTTPAMPTGATDTVVTTTPAMPTGATDTVVTTTPAMPT) is disordered. The segment covering 342 to 362 (DTANVTKPAGSTDTVVTTTPA) has biased composition (polar residues). The span at 363-395 (MPTGATDTVVTTTPAMPTGATDTVVTTTPAMPT) shows a compositional bias: low complexity. 2 stretches are compositionally biased toward low complexity: residues 471–482 (GTVTTTTAKPTG) and 490–503 (TKPT…TTTT). Residues 471 to 503 (GTVTTTTAKPTGANDTANVTKPTGATGTVTTTT) form a disordered region. The span at 525 to 634 (GTVTTTTAKP…VTTTTAKPAG (110 aa)) shows a compositional bias: low complexity. The disordered stretch occupies residues 525-670 (GTVTTTTAKP…GHKPKSGARR (146 aa)). Residues 638 to 654 (GHGHGHGHGHGHGHGHG) are compositionally biased toward basic residues.

This is an uncharacterized protein from Ictalurid herpesvirus 1 (strain Auburn) (IcHV-1).